The primary structure comprises 209 residues: Ribosomal RNA large subunit methyltransferase E (209 aa).

5 residues coordinate S-adenosyl-L-methionine: Gly-63, Trp-65, Asp-83, Asp-99, and Asp-124. Residue Lys-164 is the Proton acceptor of the active site.

The protein belongs to the class I-like SAM-binding methyltransferase superfamily. RNA methyltransferase RlmE family.

It localises to the cytoplasm. The catalysed reaction is uridine(2552) in 23S rRNA + S-adenosyl-L-methionine = 2'-O-methyluridine(2552) in 23S rRNA + S-adenosyl-L-homocysteine + H(+). Its function is as follows. Specifically methylates the uridine in position 2552 of 23S rRNA at the 2'-O position of the ribose in the fully assembled 50S ribosomal subunit. This is Ribosomal RNA large subunit methyltransferase E from Proteus mirabilis (strain HI4320).